The sequence spans 527 residues: Rhamnogalacturonate lyase A (527 aa).

The first 20 residues, 1-20, serve as a signal peptide directing secretion; it reads MLSKTFLLSSAVLWARVANA. 2 N-linked (GlcNAc...) asparagine glycosylation sites follow: asparagine 27 and asparagine 46. 2 disulfide bridges follow: cysteine 50-cysteine 93 and cysteine 184-cysteine 193. The N-linked (GlcNAc...) asparagine glycan is linked to asparagine 351.

The protein belongs to the polysaccharide lyase 4 family.

It localises to the secreted. The catalysed reaction is Endotype eliminative cleavage of L-alpha-rhamnopyranosyl-(1-&gt;4)-alpha-D-galactopyranosyluronic acid bonds of rhamnogalacturonan I domains in ramified hairy regions of pectin leaving L-rhamnopyranose at the reducing end and 4-deoxy-4,5-unsaturated D-galactopyranosyluronic acid at the non-reducing end.. Its function is as follows. Pectinolytic enzymes consist of four classes of enzymes: pectin lyase, polygalacturonase, pectin methylesterase and rhamnogalacturonase. Degrades the rhamnogalacturonan I (RG-I) backbone of pectin. Active against linseed rhamnogalacturonan. The sequence is that of Rhamnogalacturonate lyase A (rglA) from Emericella nidulans (strain FGSC A4 / ATCC 38163 / CBS 112.46 / NRRL 194 / M139) (Aspergillus nidulans).